We begin with the raw amino-acid sequence, 449 residues long: Methionine aminopeptidase 2 (449 aa).

Residues 1-91 (MAAQAAPELA…PRIPLTTLFP (91 aa)) are disordered. The span at 34-50 (EEAENEGDSDDDRDDEQ) shows a compositional bias: acidic residues. Over residues 61–75 (KKKKKKRPKKKKKTA) the composition is skewed to basic residues. Residue His199 participates in substrate binding. Asp219, Asp230, and His299 together coordinate a divalent metal cation. His307 serves as a coordination point for substrate. A divalent metal cation contacts are provided by Glu335 and Glu430.

This sequence belongs to the peptidase M24A family. Methionine aminopeptidase eukaryotic type 2 subfamily. The cofactor is Co(2+). Requires Zn(2+) as cofactor. Mn(2+) serves as cofactor. It depends on Fe(2+) as a cofactor.

The protein resides in the cytoplasm. The enzyme catalyses Release of N-terminal amino acids, preferentially methionine, from peptides and arylamides.. Cotranslationally removes the N-terminal methionine from nascent proteins. The N-terminal methionine is often cleaved when the second residue in the primary sequence is small and uncharged (Met-Ala-, Cys, Gly, Pro, Ser, Thr, or Val). This chain is Methionine aminopeptidase 2, found in Arthroderma benhamiae (strain ATCC MYA-4681 / CBS 112371) (Trichophyton mentagrophytes).